Here is a 224-residue protein sequence, read N- to C-terminus: Transcription factor MYB1 (224 aa).

HTH myb-type domains are found at residues 10–66 (LGRV…KPSI) and 67–117 (KRGH…YKKH). 2 consecutive DNA-binding regions (H-T-H motif) follow at residues 38 to 62 (WKRV…LNYL) and 90 to 113 (WSLI…NTHL).

The protein resides in the nucleus. Activates DODA1 and CYP76AD1 in the betalain red pigment pathway. This chain is Transcription factor MYB1, found in Beta vulgaris (Sugar beet).